An 82-amino-acid polypeptide reads, in one-letter code: Toxin Tpa7 (82 aa).

Residues 1–20 form the signal peptide; the sequence is MKGMILLISCLMLIEVVVEC. The region spanning 21–82 is the LCN-type CS-alpha/beta domain; it reads KEGYPLDTLN…KIWDLKKNKC (62 aa). 4 disulfide bridges follow: Cys-32-Cys-82, Cys-36-Cys-58, Cys-44-Cys-63, and Cys-48-Cys-65.

Belongs to the long (4 C-C) scorpion toxin superfamily. Sodium channel inhibitor family. Beta subfamily. In terms of tissue distribution, expressed by the venom gland.

It is found in the secreted. Beta toxins bind voltage-independently at site-4 of sodium channels (Nav) and shift the voltage of activation toward more negative potentials thereby affecting sodium channel activation and promoting spontaneous and repetitive firing. In Tityus pachyurus (Colombian scorpion), this protein is Toxin Tpa7.